A 444-amino-acid polypeptide reads, in one-letter code: Na(+)/H(+) antiporter NhaA (444 aa).

The next 11 membrane-spanning stretches (helical) occupy residues 27–47 (TTGL…NSPL), 72–92 (IHHW…GLEI), 108–128 (MLPI…YYAI), 136–156 (AGWG…LVLL), 167–187 (FLVA…ALFY), 190–210 (EINM…VSFN), 212–232 (FGIH…LFML), 312–332 (HLPV…GVSI), 349–369 (VMAG…YLAI), 385–405 (VFGV…IAEL), and 419–439 (IGIL…LRFI).

The protein belongs to the NhaA Na(+)/H(+) (TC 2.A.33) antiporter family.

It localises to the cell inner membrane. It catalyses the reaction Na(+)(in) + 2 H(+)(out) = Na(+)(out) + 2 H(+)(in). Functionally, na(+)/H(+) antiporter that extrudes sodium in exchange for external protons. The polypeptide is Na(+)/H(+) antiporter NhaA (Sulfurimonas denitrificans (strain ATCC 33889 / DSM 1251) (Thiomicrospira denitrificans (strain ATCC 33889 / DSM 1251))).